A 361-amino-acid chain; its full sequence is Peptide chain release factor 1 (361 aa).

Position 235 is an N5-methylglutamine (Q235).

It belongs to the prokaryotic/mitochondrial release factor family. In terms of processing, methylated by PrmC. Methylation increases the termination efficiency of RF1.

It localises to the cytoplasm. Its function is as follows. Peptide chain release factor 1 directs the termination of translation in response to the peptide chain termination codons UAG and UAA. The chain is Peptide chain release factor 1 from Chlamydia abortus (strain DSM 27085 / S26/3) (Chlamydophila abortus).